A 523-amino-acid chain; its full sequence is Glycine betaine transporter 1 (523 aa).

12 helical membrane-spanning segments follow: residues 33 to 53 (VFGI…VLDA), 71 to 91 (FDWL…ALIV), 109 to 129 (SFMS…LMFW), 165 to 185 (FHWG…LAFF), 214 to 234 (IVDI…LGLG), 251 to 271 (GLGL…VSVV), 286 to 306 (MVVA…ASLG), 337 to 357 (WTVF…MFIA), 372 to 392 (VLIV…GLAI), 420 to 440 (VLPF…VFFI), 467 to 487 (VFWA…GGSE), and 496 to 516 (AIST…SLLM).

It belongs to the BCCT transporter (TC 2.A.15) family.

Its subcellular location is the cell inner membrane. In terms of biological role, involved in the uptake of the osmoprotectant glycine betaine. The chain is Glycine betaine transporter 1 from Vibrio parahaemolyticus serotype O3:K6 (strain RIMD 2210633).